Here is a 253-residue protein sequence, read N- to C-terminus: 3-isopropylmalate dehydratase small subunit 3 (253 aa).

A chloroplast-targeting transit peptide spans Met-1–Arg-56.

The protein belongs to the LeuD family. As to quaternary structure, heterodimer of the large LEUC/IIL1 subunit and the small LEUD (SSU1, SSU2 or SSU3) subunits. In terms of tissue distribution, expressed in vascular bundles of roots, cotyledons and rosette leaves. Expressed in stem vascular bundles which branche off into lateral inflorescences. Expressed in connective tissues in anthers. In hypocotyls, expressed in parenchyma cells surrounding the vasculature. In rosette leaves, expressed in phloem cells and cells close to the xylem along the vascular bundles. In roots of adult plants, expressed in cells closely associated with the stele. In flowering stalks, expressed in parenchyma cells associated with the phloem or the xylem.

It localises to the plastid. Its subcellular location is the chloroplast stroma. It carries out the reaction (2R,3S)-3-isopropylmalate = (2S)-2-isopropylmalate. It catalyses the reaction a 2-(omega-methylsulfanyl)alkylmalate = a 2-(omega-methylsulfanyl)alkylmaleate + H2O. The enzyme catalyses 2-(3-methylsulfanyl)propylmalate = 2-(2-methylsulfanyl)propylmaleate + H2O. The catalysed reaction is a 3-(omega-methylsulfanyl)alkylmalate = a 2-(omega-methylsulfanyl)alkylmaleate + H2O. It carries out the reaction 2-(2-methylsulfanyl)ethylmalate = 2-(2-methylsulfanyl)ethylmaleate + H2O. It catalyses the reaction 3-(2-methylsulfanyl)ethylmalate = 2-(2-methylsulfanyl)ethylmaleate + H2O. The enzyme catalyses 3-(3-methylsulfanyl)propylmalate = 2-(2-methylsulfanyl)propylmaleate + H2O. It functions in the pathway amino-acid biosynthesis; L-leucine biosynthesis; L-leucine from 3-methyl-2-oxobutanoate: step 2/4. Its function is as follows. Catalyzes the isomerization between 2-isopropylmalate and 3-isopropylmalate, via the formation of 2-isopropylmaleate. Functions redundantly with LEUD1 in the methionine chain elongation pathway of aliphatic glucosinolate formation. This Arabidopsis thaliana (Mouse-ear cress) protein is 3-isopropylmalate dehydratase small subunit 3.